Reading from the N-terminus, the 680-residue chain is GTPase Obg (680 aa).

One can recognise an Obg domain in the interval 2 to 160; that stretch reads DQFIDVVSFE…LNIRLEVKLI (159 aa). The OBG-type G domain occupies 161–336; that stretch reads ADIGLVGMPN…LDGDMLDKVT (176 aa). Residues 167-174, 192-196, 214-217, 281-284, and 317-319 contribute to the GTP site; these read GMPNTGKS, FTTLT, DIPG, NKTD, and PEI. 2 residues coordinate Mg(2+): Ser-174 and Thr-194. The segment at 371 to 680 is radical SAM domain; that stretch reads TKRVFGPVVS…NGVLSYAVNI (310 aa). Residues 383–613 form the Radical SAM core domain; that stretch reads LGNSLGIDVI…IEIDVPSVSD (231 aa). Residues Cys-397, Cys-401, and Cys-404 each contribute to the [4Fe-4S] cluster site.

The protein belongs to the TRAFAC class OBG-HflX-like GTPase superfamily. OBG GTPase family. As to quaternary structure, monomer. Mg(2+) is required as a cofactor. The cofactor is [4Fe-4S] cluster.

It is found in the cytoplasm. Functionally, an essential GTPase which binds GTP, GDP and possibly (p)ppGpp with moderate affinity, with high nucleotide exchange rates and a fairly low GTP hydrolysis rate. Plays a role in control of the cell cycle, stress response, ribosome biogenesis and in those bacteria that undergo differentiation, in morphogenesis control. The chain is GTPase Obg from Brachyspira hyodysenteriae (strain ATCC 49526 / WA1).